The sequence spans 145 residues: Large ribosomal subunit protein bL9 (145 aa).

Belongs to the bacterial ribosomal protein bL9 family.

In terms of biological role, binds to the 23S rRNA. This is Large ribosomal subunit protein bL9 from Ureaplasma parvum serovar 3 (strain ATCC 700970).